We begin with the raw amino-acid sequence, 637 residues long: ATP-dependent zinc metalloprotease FtsH (637 aa).

The Cytoplasmic portion of the chain corresponds to 1 to 44 (MAKHSQHSSPPRKLFDTLNDLWQRAKSEAGLSAEGPEGTRRRNN). The helical transmembrane segment at 45–65 (LILYLLLVLSTLYLLNGYQTL) threads the bilayer. Over 66-141 (RNEEIPYSEF…TVRYGSNWFS (76 aa)) the chain is Periplasmic. Residues 142 to 162 (SLIFNWIVPIVLLTLFWTWMA) form a helical membrane-spanning segment. Topologically, residues 163-637 (RRMTGGRGFL…VKAVIREAAS (475 aa)) are cytoplasmic. 231-238 (GPPGTGKT) contributes to the ATP binding site. Zn(2+) is bound at residue His-454. The active site involves Glu-455. Zn(2+) is bound by residues His-458 and Asp-531.

In the central section; belongs to the AAA ATPase family. It in the C-terminal section; belongs to the peptidase M41 family. As to quaternary structure, homohexamer. Zn(2+) is required as a cofactor.

The protein localises to the cell inner membrane. Its function is as follows. Acts as a processive, ATP-dependent zinc metallopeptidase for both cytoplasmic and membrane proteins. Plays a role in the quality control of integral membrane proteins. This is ATP-dependent zinc metalloprotease FtsH from Methylococcus capsulatus (strain ATCC 33009 / NCIMB 11132 / Bath).